The chain runs to 420 residues: Calsequestrin-1 (420 aa).

Positions 1 to 22 (MKGPWLVLAALCLSLANLGPRG) are cleaved as a signal peptide. A glycan (N-linked (GlcNAc...) asparagine) is linked at Asn338. The segment at 369–420 (LEGEVNTEDDDDDDDDDDDDDDDDDDDDDDDDDDDDDDDDDDDDDDDDDDDD) is disordered.

The protein belongs to the calsequestrin family. Monomer; increases in response to a depletion of intracellular calcium. Homodimer. Homotetramer and homopolymer. Can form linear homooligomers. Ca(2+) ions promote oligomerization. Detected in skeletal muscle (at protein level). Detected in skeletal muscle.

It localises to the endoplasmic reticulum. Its subcellular location is the sarcoplasmic reticulum. It is found in the sarcoplasmic reticulum lumen. The protein resides in the sarcoplasmic reticulum membrane. The protein localises to the mitochondrion matrix. In terms of biological role, calsequestrin is a high-capacity, moderate affinity, calcium-binding protein and thus acts as an internal calcium store in muscle. Calcium ions are bound by clusters of acidic residues at the protein surface, often at the interface between subunits. Can bind around 80 Ca(2+) ions. Regulates the release of lumenal Ca(2+) via the calcium release channel RYR1; this plays an important role in triggering muscle contraction. Negatively regulates store-operated Ca(2+) entry (SOCE) activity. The protein is Calsequestrin-1 of Pelophylax lessonae (Pool frog).